The sequence spans 163 residues: MTIILGLDPSLSCTGWGVIRAEGSRIAHVANGQVKTDAKAPIADRLHHLHAAIAAVIAAHDPDRAAAEEIFINKNPQSTLKLAQARGCVLAACAAGGLAVNEHAARLVKKSVVGTGGADKAQVQAMLKVLMPGAQVAGADAADALAVAIADANLRSIANLRSP.

Catalysis depends on residues aspartate 8, glutamate 68, and aspartate 140. Aspartate 8, glutamate 68, and aspartate 140 together coordinate Mg(2+).

This sequence belongs to the RuvC family. In terms of assembly, homodimer which binds Holliday junction (HJ) DNA. The HJ becomes 2-fold symmetrical on binding to RuvC with unstacked arms; it has a different conformation from HJ DNA in complex with RuvA. In the full resolvosome a probable DNA-RuvA(4)-RuvB(12)-RuvC(2) complex forms which resolves the HJ. The cofactor is Mg(2+).

It is found in the cytoplasm. It carries out the reaction Endonucleolytic cleavage at a junction such as a reciprocal single-stranded crossover between two homologous DNA duplexes (Holliday junction).. The RuvA-RuvB-RuvC complex processes Holliday junction (HJ) DNA during genetic recombination and DNA repair. Endonuclease that resolves HJ intermediates. Cleaves cruciform DNA by making single-stranded nicks across the HJ at symmetrical positions within the homologous arms, yielding a 5'-phosphate and a 3'-hydroxyl group; requires a central core of homology in the junction. The consensus cleavage sequence is 5'-(A/T)TT(C/G)-3'. Cleavage occurs on the 3'-side of the TT dinucleotide at the point of strand exchange. HJ branch migration catalyzed by RuvA-RuvB allows RuvC to scan DNA until it finds its consensus sequence, where it cleaves and resolves the cruciform DNA. In Erythrobacter litoralis (strain HTCC2594), this protein is Crossover junction endodeoxyribonuclease RuvC.